We begin with the raw amino-acid sequence, 427 residues long: 3-phosphoshikimate 1-carboxyvinyltransferase (427 aa).

3 residues coordinate 3-phosphoshikimate: Lys-20, Ser-21, and Arg-25. Lys-20 lines the phosphoenolpyruvate pocket. The phosphoenolpyruvate site is built by Gly-92 and Arg-120. Positions 166, 168, 312, and 339 each coordinate 3-phosphoshikimate. Residue Gln-168 coordinates phosphoenolpyruvate. Asp-312 functions as the Proton acceptor in the catalytic mechanism. Positions 343 and 385 each coordinate phosphoenolpyruvate.

This sequence belongs to the EPSP synthase family. In terms of assembly, monomer.

Its subcellular location is the cytoplasm. It carries out the reaction 3-phosphoshikimate + phosphoenolpyruvate = 5-O-(1-carboxyvinyl)-3-phosphoshikimate + phosphate. It functions in the pathway metabolic intermediate biosynthesis; chorismate biosynthesis; chorismate from D-erythrose 4-phosphate and phosphoenolpyruvate: step 6/7. Functionally, catalyzes the transfer of the enolpyruvyl moiety of phosphoenolpyruvate (PEP) to the 5-hydroxyl of shikimate-3-phosphate (S3P) to produce enolpyruvyl shikimate-3-phosphate and inorganic phosphate. The sequence is that of 3-phosphoshikimate 1-carboxyvinyltransferase from Streptococcus uberis (strain ATCC BAA-854 / 0140J).